A 488-amino-acid polypeptide reads, in one-letter code: MSFNHKTIEELHDLLVAKEISATELTQKTLEDIKSREEAVGSFITVSEEAALKQAAAIDAKGIDADNLMSGIPLAVKDNISTKGILTTAASKMLHNYEPIFDATSVANAYAKDMIVIGKTNMDEFAMGGSTETSYFKKTKNAWDHTKVPGGSSGGSATAVASGQVRLSLGSDTGGSIRQPAAFNGVVGLKPTYGTVSRYGLIAFGSSLDQIGPFAPTVKENAQLLNVIASSDVKDATSAPVRIADYTSKIGRDIKGMKIALPKEYLGEGIDPEIKETVLAAAKQFEALGATVEEVSLPHSKYGVAVYYIIASSEASSNLQRFDGIRYGFRADDAKNLDEIYVNTRSQGFGDEVKRRIMLGTFSLSSGYYDAYFKKAGQVRTLIIQDFDKVFADYDLILGPTTPTVAFGLDTLNHDPVAMYLADLLTIPVNLAGLPGISIPAGFVDGLPVGLQLIGPKYAEETIYQAAAAFEAVTDYHKQQPIIFGGDK.

Residues lysine 77 and serine 152 each act as charge relay system in the active site. Serine 176 functions as the Acyl-ester intermediate in the catalytic mechanism.

Belongs to the amidase family. GatA subfamily. In terms of assembly, heterotrimer of A, B and C subunits.

It carries out the reaction L-glutamyl-tRNA(Gln) + L-glutamine + ATP + H2O = L-glutaminyl-tRNA(Gln) + L-glutamate + ADP + phosphate + H(+). Its function is as follows. Allows the formation of correctly charged Gln-tRNA(Gln) through the transamidation of misacylated Glu-tRNA(Gln) in organisms which lack glutaminyl-tRNA synthetase. The reaction takes place in the presence of glutamine and ATP through an activated gamma-phospho-Glu-tRNA(Gln). The polypeptide is Glutamyl-tRNA(Gln) amidotransferase subunit A (Streptococcus pyogenes serotype M5 (strain Manfredo)).